We begin with the raw amino-acid sequence, 372 residues long: uncharacterized protein (372 aa).

2 stretches are compositionally biased toward basic residues: residues 1-11 (MNKILGLRRAK) and 38-48 (RLRRGMQRLSR). Residues 1 to 127 (MNKILGLRRA…NSGTRDTPCW (127 aa)) are disordered. The segment covering 50 to 61 (GYGDNRRSRGSE) has biased composition (basic and acidic residues). Positions 93 to 104 (GKTSPCGSSGTP) are enriched in polar residues.

This is an uncharacterized protein from Psittacid herpesvirus 1 (isolate Amazon parrot/-/97-0001/1997) (PsHV-1).